Here is a 1047-residue protein sequence, read N- to C-terminus: Probable alpha-mannosidase At5g66150 (1047 aa).

A signal peptide spans 1–27 (MEKPGMSLLKGSLCVIVFLLLLSLVES). The Zn(2+) site is built by His56, Asp58, and Asp178. 3 N-linked (GlcNAc...) asparagine glycosylation sites follow: Asn280, Asn287, and Asn345. Residue His419 participates in Zn(2+) binding. 2 disulfide bridges follow: Cys455–Cys465 and Cys476–Cys484. Residues Asn480, Asn508, Asn541, Asn605, Asn606, Asn668, Asn780, and Asn857 are each glycosylated (N-linked (GlcNAc...) asparagine). A disulfide bridge links Cys855 with Cys860.

The protein belongs to the glycosyl hydrolase 38 family. In terms of assembly, homodimer. It depends on Zn(2+) as a cofactor.

Its subcellular location is the vacuole. The enzyme catalyses Hydrolysis of terminal, non-reducing alpha-D-mannose residues in alpha-D-mannosides.. Liberates mannose from p-nitrophenyl-alpha-D-mannoside in vitro. The sequence is that of Probable alpha-mannosidase At5g66150 from Arabidopsis thaliana (Mouse-ear cress).